The following is a 168-amino-acid chain: Cell division inhibitor SulA (168 aa).

Residues 106-112 (ALQTGNY) form a ftsZ binding region. The interval 161–168 (KIHSSLYH) is lon protease binding.

This sequence belongs to the SulA family. As to quaternary structure, interacts with FtsZ. Post-translationally, is rapidly cleaved and degraded by the Lon protease once DNA damage is repaired.

In terms of biological role, component of the SOS system and an inhibitor of cell division. Accumulation of SulA causes rapid cessation of cell division and the appearance of long, non-septate filaments. In the presence of GTP, binds a polymerization-competent form of FtsZ in a 1:1 ratio, thus inhibiting FtsZ polymerization and therefore preventing it from participating in the assembly of the Z ring. This mechanism prevents the premature segregation of damaged DNA to daughter cells during cell division. The polypeptide is Cell division inhibitor SulA (Serratia marcescens).